The sequence spans 499 residues: uncharacterized protein (499 aa).

Transmembrane regions (helical) follow at residues 5 to 25, 79 to 99, 110 to 130, 132 to 152, 170 to 190, 203 to 223, 252 to 272, 286 to 306, 332 to 352, 354 to 374, and 377 to 397; these read FLLV…YNAV, LGLR…TYLL, ALLS…ARYA, PEVP…EYFT, VLTK…FYLL, YAGT…QYLV, ALDI…ALFW, VWFS…PVYI, LSLI…SLYF, FSAT…LKKY, and LPAF…LPYV.

This sequence belongs to the glycosyltransferase 39 family.

Its subcellular location is the cell membrane. This is an uncharacterized protein from Aquifex aeolicus (strain VF5).